Here is a 607-residue protein sequence, read N- to C-terminus: Phosphomethylpyrimidine synthase (607 aa).

Substrate is bound by residues Asn216, Met245, Tyr274, His310, 330-332, 371-374, and Glu410; these read SRG and DGLR. Position 414 (His414) interacts with Zn(2+). Tyr437 contributes to the substrate binding site. A Zn(2+)-binding site is contributed by His478. [4Fe-4S] cluster-binding residues include Cys558, Cys561, and Cys566.

It belongs to the ThiC family. Homodimer. Requires [4Fe-4S] cluster as cofactor.

It carries out the reaction 5-amino-1-(5-phospho-beta-D-ribosyl)imidazole + S-adenosyl-L-methionine = 4-amino-2-methyl-5-(phosphooxymethyl)pyrimidine + CO + 5'-deoxyadenosine + formate + L-methionine + 3 H(+). The protein operates within cofactor biosynthesis; thiamine diphosphate biosynthesis. Its function is as follows. Catalyzes the synthesis of the hydroxymethylpyrimidine phosphate (HMP-P) moiety of thiamine from aminoimidazole ribotide (AIR) in a radical S-adenosyl-L-methionine (SAM)-dependent reaction. The sequence is that of Phosphomethylpyrimidine synthase from Agrobacterium fabrum (strain C58 / ATCC 33970) (Agrobacterium tumefaciens (strain C58)).